The following is a 315-amino-acid chain: tRNA-dihydrouridine(16) synthase (315 aa).

Residues 7–9 (PME) and Gln68 each bind FMN. Catalysis depends on Cys98, which acts as the Proton donor. Residues Lys139, 200–202 (NGE), and 224–225 (GR) each bind FMN.

Belongs to the Dus family. DusC subfamily. It depends on FMN as a cofactor.

The enzyme catalyses 5,6-dihydrouridine(16) in tRNA + NADP(+) = uridine(16) in tRNA + NADPH + H(+). It catalyses the reaction 5,6-dihydrouridine(16) in tRNA + NAD(+) = uridine(16) in tRNA + NADH + H(+). Functionally, catalyzes the synthesis of 5,6-dihydrouridine (D), a modified base found in the D-loop of most tRNAs, via the reduction of the C5-C6 double bond in target uridines. Specifically modifies U16 in tRNAs. The sequence is that of tRNA-dihydrouridine(16) synthase from Shigella flexneri.